We begin with the raw amino-acid sequence, 130 residues long: MTLLDPLANALSHITNSEKVGKSEVYIKPASKLIGEVLRVMQENGYIGEFEFIDDGRAGIYRVQLLGKVNKAGAIKPRFSVKAKEYEKWEKRFLPAFEFGILVVSTSQGVMTHKEALEKGIGGRLIAYVY.

It belongs to the universal ribosomal protein uS8 family. In terms of assembly, part of the 30S ribosomal subunit.

Its function is as follows. One of the primary rRNA binding proteins, it binds directly to 16S rRNA central domain where it helps coordinate assembly of the platform of the 30S subunit. The chain is Small ribosomal subunit protein uS8 from Thermococcus sibiricus (strain DSM 12597 / MM 739).